Consider the following 705-residue polypeptide: DNA ligase (705 aa).

NAD(+)-binding positions include 42–46 (DADFD), 91–92 (SL), and glutamate 125. Catalysis depends on lysine 127, which acts as the N6-AMP-lysine intermediate. Arginine 148, glutamate 183, lysine 299, and lysine 323 together coordinate NAD(+). Zn(2+) contacts are provided by cysteine 428, cysteine 431, cysteine 446, and cysteine 452. Residues 626 to 705 (TDGSPVAGKT…DGWLALIEGL (80 aa)) form the BRCT domain.

The protein belongs to the NAD-dependent DNA ligase family. LigA subfamily. Requires Mg(2+) as cofactor. The cofactor is Mn(2+).

It catalyses the reaction NAD(+) + (deoxyribonucleotide)n-3'-hydroxyl + 5'-phospho-(deoxyribonucleotide)m = (deoxyribonucleotide)n+m + AMP + beta-nicotinamide D-nucleotide.. In terms of biological role, DNA ligase that catalyzes the formation of phosphodiester linkages between 5'-phosphoryl and 3'-hydroxyl groups in double-stranded DNA using NAD as a coenzyme and as the energy source for the reaction. It is essential for DNA replication and repair of damaged DNA. This Roseobacter denitrificans (strain ATCC 33942 / OCh 114) (Erythrobacter sp. (strain OCh 114)) protein is DNA ligase.